A 163-amino-acid chain; its full sequence is Neurotrophin-3 (163 aa).

Positions 1-3 (IQS) are cleaved as a signal peptide. Residues 4 to 119 (TSMDQGILTE…VLNRTSRRKR (116 aa)) constitute a propeptide that is removed on maturation. Asn112 carries an N-linked (GlcNAc...) asparagine glycan.

Belongs to the NGF-beta family.

Its subcellular location is the secreted. Functionally, seems to promote the survival of visceral and proprioceptive sensory neurons. This Epicrates cenchria (Rainbow boa) protein is Neurotrophin-3 (NTF3).